We begin with the raw amino-acid sequence, 254 residues long: Alcohol dehydrogenase 2 (254 aa).

10 to 33 contributes to the NAD(+) binding site; the sequence is FVAGLGGIGLDTSREIVKSGPKNL. A substrate-binding site is contributed by Ser138. Tyr151 functions as the Proton acceptor in the catalytic mechanism.

It belongs to the short-chain dehydrogenases/reductases (SDR) family. As to quaternary structure, homodimer.

The catalysed reaction is a primary alcohol + NAD(+) = an aldehyde + NADH + H(+). The enzyme catalyses a secondary alcohol + NAD(+) = a ketone + NADH + H(+). In Drosophila montana (Fruit fly), this protein is Alcohol dehydrogenase 2 (Adh2).